The following is a 570-amino-acid chain: Low-affinity glucose transporter HXT1 (570 aa).

Positions 1–20 (MNSTPDLISPQKSNSSNSYE) are enriched in polar residues. The interval 1 to 51 (MNSTPDLISPQKSNSSNSYELESGRSKAMNTPEGKNESFHDNLSESQVQPA) is disordered. The Cytoplasmic portion of the chain corresponds to 1–60 (MNSTPDLISPQKSNSSNSYELESGRSKAMNTPEGKNESFHDNLSESQVQPAVAPPNTGKG). 3 positions are modified to phosphoserine: S23, S38, and S44. Positions 34–43 (GKNESFHDNL) are enriched in basic and acidic residues. The chain crosses the membrane as a helical span at residues 61-81 (VYVTVSICCVMVAFGGFIFGW). The Extracellular portion of the chain corresponds to 82–116 (DTGTISGFVAQTDFLRRFGMKHHDGSHYLSKVRTG). The helical transmembrane segment at 117-137 (LIVSIFNIGCAIGGIVLAKLG) threads the bilayer. The Cytoplasmic segment spans residues 138 to 143 (DMYGRR). A helical membrane pass occupies residues 144–164 (IGLIVVVVIYTIGIIIQIASI). Over 165 to 174 (NKWYQYFIGR) the chain is Extracellular. A helical membrane pass occupies residues 175–195 (IISGLGVGGITVLSPMLISEV). The Cytoplasmic segment spans residues 196 to 201 (APSEMR). A helical membrane pass occupies residues 202-222 (GTLVSCYQVMITLGIFLGYCT). Over 223 to 236 (NFGTKNYSNSVQWR) the chain is Extracellular. N228 carries an N-linked (GlcNAc...) asparagine glycan. Residues 237-257 (VPLGLCFAWALFMIGGMMFVP) traverse the membrane as a helical segment. Over 258–340 (ESPRYLVEAG…IQSLQQLTGD (83 aa)) the chain is Cytoplasmic. The helical transmembrane segment at 341–357 (NYFFYYGTIVFQAVGLS) threads the bilayer. Topologically, residues 358-363 (DSFETS) are extracellular. Residues 364–381 (IVFGVVNFFSTCCSLYTV) traverse the membrane as a helical segment. The Cytoplasmic segment spans residues 382-388 (DRFGRRN). A helical membrane pass occupies residues 389–409 (CLMWGAVGMVCCYVVYASVGV). The Extracellular segment spans residues 410–431 (TRLWPNGQDQPSSKGAGNCMIV). A helical membrane pass occupies residues 432–452 (FACFYIFCFATTWAPIAYVVI). Over 453–469 (SECFPLRVKSKCMSIAS) the chain is Cytoplasmic. The helical transmembrane segment at 470–490 (AANWIWGFLISFFTPFITGAI) threads the bilayer. A topological domain (extracellular) is located at residue N491. The chain crosses the membrane as a helical span at residues 492 to 512 (FYYGYVFMGCMVFAYFYVFFF). Over 513–570 (VPETKGLSLEEVNDMYAEGVLPWKSASWVPVSKRGADYNADDLMHDDQPFYKSLFSRK) the chain is Cytoplasmic.

This sequence belongs to the major facilitator superfamily. Sugar transporter (TC 2.A.1.1) family.

It localises to the membrane. Its function is as follows. Low-affinity glucose transporter. HXT1 is as well involved in the transport of mannose. In Saccharomyces cerevisiae (strain ATCC 204508 / S288c) (Baker's yeast), this protein is Low-affinity glucose transporter HXT1 (HXT1).